Here is a 95-residue protein sequence, read N- to C-terminus: MSLDAKTVTRIARLARIGLQPEEIETLGKDMGSIIDWVEQLKEVDVTGVDPMIGTGLAKPRLREDRVTDGNCRDKVLSNAPEREGPFYTVPKVVE.

Belongs to the GatC family. Heterotrimer of A, B and C subunits.

The catalysed reaction is L-glutamyl-tRNA(Gln) + L-glutamine + ATP + H2O = L-glutaminyl-tRNA(Gln) + L-glutamate + ADP + phosphate + H(+). It catalyses the reaction L-aspartyl-tRNA(Asn) + L-glutamine + ATP + H2O = L-asparaginyl-tRNA(Asn) + L-glutamate + ADP + phosphate + 2 H(+). Its function is as follows. Allows the formation of correctly charged Asn-tRNA(Asn) or Gln-tRNA(Gln) through the transamidation of misacylated Asp-tRNA(Asn) or Glu-tRNA(Gln) in organisms which lack either or both of asparaginyl-tRNA or glutaminyl-tRNA synthetases. The reaction takes place in the presence of glutamine and ATP through an activated phospho-Asp-tRNA(Asn) or phospho-Glu-tRNA(Gln). The protein is Aspartyl/glutamyl-tRNA(Asn/Gln) amidotransferase subunit C of Gluconobacter oxydans (strain 621H) (Gluconobacter suboxydans).